A 146-amino-acid chain; its full sequence is MLLQGTHRIGRMAMLLALADENESPVLSIPKDWKYCTGKVGSMNSQKVVAAMETAAKSNQVIETDVYRETHALYHAIMEALYGVTRGQIQLADVLRTVGLRFAIVRGTPYDGKKEGEWVAVALYGTIGAPVKGSEHEAIGLGINHI.

This sequence belongs to the HutP family. In terms of assembly, homohexamer.

In terms of biological role, antiterminator that binds to cis-acting regulatory sequences on the mRNA in the presence of histidine, thereby suppressing transcription termination and activating the hut operon for histidine utilization. The polypeptide is Hut operon positive regulatory protein (Bacillus cereus (strain ZK / E33L)).